A 449-amino-acid polypeptide reads, in one-letter code: Chromosomal replication initiator protein DnaA (449 aa).

The segment at 1-71 (MPSSLWKHCL…LLSHYSSGRI (71 aa)) is domain I, interacts with DnaA modulators. The interval 71–112 (IEKALLEVGSCSLQPQPHIQAVELTSKSARSSSRVVDRIPES) is domain II. A domain III, AAA+ region region spans residues 113–329 (RLNKNYTFDS…GALRRVIAYS (217 aa)). Residues glycine 157, glycine 159, lysine 160, and threonine 161 each coordinate ATP. The segment at 330–449 (RFTHRPITME…YHNLLKKLST (120 aa)) is domain IV, binds dsDNA.

This sequence belongs to the DnaA family. Oligomerizes as a right-handed, spiral filament on DNA at oriC.

The protein localises to the cytoplasm. Its function is as follows. Plays an essential role in the initiation and regulation of chromosomal replication. ATP-DnaA binds to the origin of replication (oriC) to initiate formation of the DNA replication initiation complex once per cell cycle. Binds the DnaA box (a 9 base pair repeat at the origin) and separates the double-stranded (ds)DNA. Forms a right-handed helical filament on oriC DNA; dsDNA binds to the exterior of the filament while single-stranded (ss)DNA is stabiized in the filament's interior. The ATP-DnaA-oriC complex binds and stabilizes one strand of the AT-rich DNA unwinding element (DUE), permitting loading of DNA polymerase. After initiation quickly degrades to an ADP-DnaA complex that is not apt for DNA replication. Binds acidic phospholipids. The protein is Chromosomal replication initiator protein DnaA of Nitrosococcus oceani (strain ATCC 19707 / BCRC 17464 / JCM 30415 / NCIMB 11848 / C-107).